The following is a 385-amino-acid chain: Putative UDP-N-acetylglucosamine 2-epimerase (385 aa).

It belongs to the UDP-N-acetylglucosamine 2-epimerase family.

Its subcellular location is the cytoplasm. It carries out the reaction UDP-N-acetyl-alpha-D-glucosamine = UDP-N-acetyl-alpha-D-mannosamine. The sequence is that of Putative UDP-N-acetylglucosamine 2-epimerase from Clostridium acetobutylicum (strain ATCC 824 / DSM 792 / JCM 1419 / IAM 19013 / LMG 5710 / NBRC 13948 / NRRL B-527 / VKM B-1787 / 2291 / W).